Reading from the N-terminus, the 524-residue chain is 2-isopropylmalate synthase (524 aa).

Residues 12 to 274 (VIIFDTTLRD…WNRIETTMLT (263 aa)) enclose the Pyruvate carboxyltransferase domain. Mn(2+) is bound by residues Asp21, His209, His211, and Asn245. The interval 398–524 (KLMSLTVIAG…EDAPAVAVAG (127 aa)) is regulatory domain.

This sequence belongs to the alpha-IPM synthase/homocitrate synthase family. LeuA type 1 subfamily. As to quaternary structure, homodimer. It depends on Mn(2+) as a cofactor.

The protein resides in the cytoplasm. The catalysed reaction is 3-methyl-2-oxobutanoate + acetyl-CoA + H2O = (2S)-2-isopropylmalate + CoA + H(+). It participates in amino-acid biosynthesis; L-leucine biosynthesis; L-leucine from 3-methyl-2-oxobutanoate: step 1/4. Functionally, catalyzes the condensation of the acetyl group of acetyl-CoA with 3-methyl-2-oxobutanoate (2-ketoisovalerate) to form 3-carboxy-3-hydroxy-4-methylpentanoate (2-isopropylmalate). The polypeptide is 2-isopropylmalate synthase (Rhodopseudomonas palustris (strain ATCC BAA-98 / CGA009)).